Consider the following 112-residue polypeptide: DNA-binding protein TON_1102 (112 aa).

This sequence belongs to the PDCD5 family.

This Thermococcus onnurineus (strain NA1) protein is DNA-binding protein TON_1102.